The following is a 379-amino-acid chain: Anhydro-N-acetylmuramic acid kinase (379 aa).

Residue 12 to 19 participates in ATP binding; sequence GTSLDGMD.

It belongs to the anhydro-N-acetylmuramic acid kinase family.

The catalysed reaction is 1,6-anhydro-N-acetyl-beta-muramate + ATP + H2O = N-acetyl-D-muramate 6-phosphate + ADP + H(+). Its pathway is amino-sugar metabolism; 1,6-anhydro-N-acetylmuramate degradation. It participates in cell wall biogenesis; peptidoglycan recycling. In terms of biological role, catalyzes the specific phosphorylation of 1,6-anhydro-N-acetylmuramic acid (anhMurNAc) with the simultaneous cleavage of the 1,6-anhydro ring, generating MurNAc-6-P. Is required for the utilization of anhMurNAc either imported from the medium or derived from its own cell wall murein, and thus plays a role in cell wall recycling. The protein is Anhydro-N-acetylmuramic acid kinase of Gloeobacter violaceus (strain ATCC 29082 / PCC 7421).